The following is a 93-amino-acid chain: Small ribosomal subunit protein bS16 (93 aa).

This sequence belongs to the bacterial ribosomal protein bS16 family.

The polypeptide is Small ribosomal subunit protein bS16 (Dictyoglomus thermophilum (strain ATCC 35947 / DSM 3960 / H-6-12)).